A 148-amino-acid chain; its full sequence is Large ribosomal subunit protein uL11 (148 aa).

Residues 89-108 (EKKKGSGAHKPGKEKVGQVT) are disordered.

The protein belongs to the universal ribosomal protein uL11 family. Part of the ribosomal stalk of the 50S ribosomal subunit. Interacts with L10 and the large rRNA to form the base of the stalk. L10 forms an elongated spine to which L12 dimers bind in a sequential fashion forming a multimeric L10(L12)X complex. Post-translationally, one or more lysine residues are methylated.

Its function is as follows. Forms part of the ribosomal stalk which helps the ribosome interact with GTP-bound translation factors. In Anaeromyxobacter dehalogenans (strain 2CP-1 / ATCC BAA-258), this protein is Large ribosomal subunit protein uL11.